The following is a 1355-amino-acid chain: Probable major glycoprotein (1355 aa).

The first 16 residues, 1 to 16, serve as a signal peptide directing secretion; that stretch reads MKKTMLAIILIPLVYA. Asn81, Asn112, Asn129, Asn169, Asn173, Asn192, Asn542, Asn655, Asn682, Asn744, Asn780, Asn811, Asn815, Asn860, Asn865, Asn882, Asn895, Asn1213, Asn1225, Asn1267, and Asn1274 each carry an N-linked (GlcNAc...) asparagine; by host glycan. Residues 1245–1299 are a coiled coil; that stretch reads QIVSMEMEIQDLKLELIQLQKINTSVHMENITGDIDAMKATIEEYRAEMAKLRVT. The helical transmembrane segment at 1308-1328 threads the bilayer; sequence FIYAILGVIAIGALIAIIFMA.

Its subcellular location is the host membrane. The protein is Probable major glycoprotein (ORF46) of Ictaluridae (bullhead catfishes).